Consider the following 610-residue polypeptide: 1,8-cineol synthase, chloroplastic (610 aa).

The N-terminal 51 residues, 1-51, are a transit peptide targeting the chloroplast; sequence MNHHLIITPIFHLQIMLPVATLKRPPPPAATCSIYSFSRGTPSLVSKARLS. Residues arginine 322, aspartate 359, aspartate 363, arginine 500, and asparagine 503 each coordinate (2E)-geranyl diphosphate. Positions 359 and 363 each coordinate Mg(2+). Residues 359 to 363 carry the DDXXD motif motif; sequence DDVYD. Mg(2+)-binding residues include asparagine 503, threonine 507, and glutamate 511.

Belongs to the terpene synthase family. Tpsb subfamily. Monomer. It depends on Mg(2+) as a cofactor. Mn(2+) is required as a cofactor. In terms of tissue distribution, confined to buds and flowers.

It localises to the plastid. The protein localises to the chloroplast. It catalyses the reaction (2E)-geranyl diphosphate + H2O = 1,8-cineole + diphosphate. It carries out the reaction (2E)-geranyl diphosphate = limonene + diphosphate. The enzyme catalyses (2E)-geranyl diphosphate = sabinene + diphosphate. The catalysed reaction is (2E)-geranyl diphosphate = (E)-beta-ocimene + diphosphate. It catalyses the reaction (2E)-geranyl diphosphate = beta-myrcene + diphosphate. It carries out the reaction (2E)-geranyl diphosphate = alpha-pinene + diphosphate. The enzyme catalyses (2E)-geranyl diphosphate + H2O = (S)-alpha-terpineol + diphosphate. The protein operates within secondary metabolite biosynthesis; terpenoid biosynthesis. Functionally, monoterpene synthase involved in the biosynthesis of monoterpene natural products of the 'cineole cassette', volatile compounds present in floral scent. Catalyzes the conversion of (2E)-geranyl diphosphate (GPP) into 1,8-cineole and, as minor products, limonene, sabinene, (E)-beta-ocimene, beta-myrcene, alpha-pinene and alpha-terpineol. The chain is 1,8-cineol synthase, chloroplastic from Nicotiana suaveolens (Australian tobacco).